The following is a 348-amino-acid chain: Protein RecA (348 aa).

Residue 67-74 (GPESSGKT) participates in ATP binding.

Belongs to the RecA family.

Its subcellular location is the cytoplasm. Can catalyze the hydrolysis of ATP in the presence of single-stranded DNA, the ATP-dependent uptake of single-stranded DNA by duplex DNA, and the ATP-dependent hybridization of homologous single-stranded DNAs. It interacts with LexA causing its activation and leading to its autocatalytic cleavage. The protein is Protein RecA of Clostridioides difficile (strain 630) (Peptoclostridium difficile).